We begin with the raw amino-acid sequence, 541 residues long: MKNTFARYSLTIPSIPENVISHLRQWNEWMVGDTSDDSPGPSSTVSTMTTTGTVDRRSLLSAASMVRQQSDTTGVRRLVRARAVQEDDEAGPHSSNNLAATMSPNLSRPTRYVKSVSQQRSESYIQLNQYRLMEEIGQGSYGIVKLAYNEEDKNLYALKVLDKMKLLKNFACFRQPPPRRNKENAAPSVLRNPLQLVQKEIAILKKLSHPNVVKLVEVLDDPNDNYLYMVFEFVEKGSILEIPTDKPLDEDTAWSYFRDTLCGLEYLHYQKIVHRDIKPSNLLLSDIGQVKIADFGVSCEFEGIDAFLSGTAGTPAFMAPEALTEGANHFYSGRAQDIWSLGITLYAFVIGTVPFVDNYIIALHKKIKNDPIVFPEAPILSEALQDIILGMLKKDPGHRLMLHEVKVHTWVTRDGTVPMSSEQENCHLVTVTEEEIENCVRVIPRLDTLILVKAMGHRKRFGNPFRNKLSAQSSIRDRRKSSSVKDPTYVPPPNSPPATSNNNLNSTKVDRPEIKCIEMNLSGLTLKVDEAMQSKVESARQ.

A disordered region spans residues 83–106; that stretch reads AVQEDDEAGPHSSNNLAATMSPNL. The segment covering 93 to 106 has biased composition (polar residues); it reads HSSNNLAATMSPNL. A Protein kinase domain is found at 130–411; that stretch reads YRLMEEIGQG…LHEVKVHTWV (282 aa). ATP-binding positions include 136–144 and Lys-159; that span reads IGQGSYGIV. The RP domain stretch occupies residues 169–190; it reads NFACFRQPPPRRNKENAAPSVL. Asp-276 serves as the catalytic Proton acceptor. The tract at residues 437–442 is autoinhibitory domain; it reads ENCVRV. A calmodulin-binding region spans residues 440–465; it reads VRVIPRLDTLILVKAMGHRKRFGNPF. Residues 462–512 are disordered; that stretch reads GNPFRNKLSAQSSIRDRRKSSSVKDPTYVPPPNSPPATSNNNLNSTKVDRP. The segment covering 497-507 has biased composition (low complexity); the sequence is PATSNNNLNST.

The protein belongs to the protein kinase superfamily. Ser/Thr protein kinase family. Requires Mg(2+) as cofactor. As to expression, expressed in head and tail neurons and vulval muscles.

The protein localises to the cytoplasm. It catalyses the reaction L-seryl-[protein] + ATP = O-phospho-L-seryl-[protein] + ADP + H(+). It carries out the reaction L-threonyl-[protein] + ATP = O-phospho-L-threonyl-[protein] + ADP + H(+). Its activity is regulated as follows. Activated by Ca(2+)/calmodulin. Binding of calmodulin may relieve intrasteric autoinhibition. Its function is as follows. Calcium/calmodulin-dependent protein kinase which phosphorylates cmk-1. Component of a calcium-triggered signaling cascade involved in CRE-mediated transcriptional activation, probably through cmk-1-mediated crh-1/CREB phosphorylation. Plays a role in salt-avoidance learning behavior via the phosphorylation of cmk-1. This chain is Calcium/calmodulin-dependent protein kinase kinase, found in Caenorhabditis elegans.